A 228-amino-acid polypeptide reads, in one-letter code: 3-dehydroquinate dehydratase (228 aa).

3-dehydroquinate-binding positions include E30–R32 and R62. Residue H118 is the Proton donor/acceptor of the active site. K143 serves as the catalytic Schiff-base intermediate with substrate. R186, S205, and Q209 together coordinate 3-dehydroquinate.

The protein belongs to the type-I 3-dehydroquinase family. In terms of assembly, homodimer.

The catalysed reaction is 3-dehydroquinate = 3-dehydroshikimate + H2O. The protein operates within metabolic intermediate biosynthesis; chorismate biosynthesis; chorismate from D-erythrose 4-phosphate and phosphoenolpyruvate: step 3/7. Its function is as follows. Involved in the third step of the chorismate pathway, which leads to the biosynthesis of aromatic amino acids. Catalyzes the cis-dehydration of 3-dehydroquinate (DHQ) and introduces the first double bond of the aromatic ring to yield 3-dehydroshikimate. The polypeptide is 3-dehydroquinate dehydratase (Streptococcus pyogenes serotype M12 (strain MGAS9429)).